A 217-amino-acid chain; its full sequence is Cytochrome b5 domain-containing protein 1 (217 aa).

In terms of domain architecture, Cytochrome b5 heme-binding spans 6–72; that stretch reads PRYFTPREVS…NPKTGDVKTH (67 aa). Heme contacts are provided by histidine 41 and histidine 72.

It belongs to the cytochrome b5 family.

The protein resides in the cytoplasm. Its subcellular location is the cytoskeleton. It localises to the cilium axoneme. Its function is as follows. Radial spoke stalk protein that binds heme under oxidizing conditions. Required for the coordinated beating of multiple cilia maybe by functioning in a redox signaling pathway. The sequence is that of Cytochrome b5 domain-containing protein 1 (cyb5d1) from Xenopus laevis (African clawed frog).